A 400-amino-acid chain; its full sequence is MTQFASPVLHSLLDTDAYKLHMQQAVFHHYYDVHVAAEFRCRGDDLLGIYADAIREQVQAMQHLRLQDDEYQWLSALPFFKADYLNWLREFRFNPEQVTVSNDNGKLDIRLSGPWREVILWEVPLLAVISEMVHRYRSPQADVAQALDTLESKLVDFSALTAGLDMSRFHLMDFGTRRRFSREVQETIVKRLQQESWFVGTSNYDLARRLSLTPMGTQAHEWFQAHQQISPDLANSQRAALAAWLEEYPDQLGIALTDCITMDAFLRDFGVEFASRYQGLRHDSGDPVEWGEKAIAHYEKLEIDPQSKTLVFSDNLDLRKAVELYRHFSSRVQLSFGIGTRLTCDIPQVKPLNIVIKLVECNGKPVAKLSDSPGKTICHDKAFVRALRKAFDLPHIKKAS.

Residue His220 is modified to Phosphohistidine; by autocatalysis.

The protein belongs to the NAPRTase family. Transiently phosphorylated on a His residue during the reaction cycle. Phosphorylation strongly increases the affinity for substrates and increases the rate of nicotinate D-ribonucleotide production. Dephosphorylation regenerates the low-affinity form of the enzyme, leading to product release.

The enzyme catalyses nicotinate + 5-phospho-alpha-D-ribose 1-diphosphate + ATP + H2O = nicotinate beta-D-ribonucleotide + ADP + phosphate + diphosphate. Its pathway is cofactor biosynthesis; NAD(+) biosynthesis; nicotinate D-ribonucleotide from nicotinate: step 1/1. In terms of biological role, catalyzes the synthesis of beta-nicotinate D-ribonucleotide from nicotinate and 5-phospho-D-ribose 1-phosphate at the expense of ATP. The sequence is that of Nicotinate phosphoribosyltransferase from Escherichia coli O157:H7.